We begin with the raw amino-acid sequence, 619 residues long: ESX-2 secretion system protein EccA2 (619 aa).

Gly373–Thr380 contributes to the ATP binding site.

This sequence belongs to the CbxX/CfxQ family. In terms of assembly, part of the ESX-2 / type VII secretion system (T7SS), which is composed of cytosolic and membrane components. Residues 522-619 interact with an artificial EsxB-EsxA heterodimer from the adjacent ESX-1 locus.

Its subcellular location is the cytoplasm. In terms of biological role, shows ATPase activity. Could provide energy for export of ESX-2 substrates. The chain is ESX-2 secretion system protein EccA2 (eccA2) from Mycobacterium tuberculosis (strain ATCC 25618 / H37Rv).